Reading from the N-terminus, the 580-residue chain is Dihydroxy-acid dehydratase (580 aa).

Asp95 contacts Mg(2+). Residue Cys136 participates in [2Fe-2S] cluster binding. Mg(2+) is bound by residues Asp137 and Lys138. Lys138 is subject to N6-carboxylysine. [2Fe-2S] cluster is bound at residue Cys209. Position 462 (Glu462) interacts with Mg(2+). Ser488 functions as the Proton acceptor in the catalytic mechanism.

It belongs to the IlvD/Edd family. Homodimer. Requires [2Fe-2S] cluster as cofactor. Mg(2+) is required as a cofactor.

The enzyme catalyses (2R)-2,3-dihydroxy-3-methylbutanoate = 3-methyl-2-oxobutanoate + H2O. The catalysed reaction is (2R,3R)-2,3-dihydroxy-3-methylpentanoate = (S)-3-methyl-2-oxopentanoate + H2O. It functions in the pathway amino-acid biosynthesis; L-isoleucine biosynthesis; L-isoleucine from 2-oxobutanoate: step 3/4. The protein operates within amino-acid biosynthesis; L-valine biosynthesis; L-valine from pyruvate: step 3/4. Functionally, functions in the biosynthesis of branched-chain amino acids. Catalyzes the dehydration of (2R,3R)-2,3-dihydroxy-3-methylpentanoate (2,3-dihydroxy-3-methylvalerate) into 2-oxo-3-methylpentanoate (2-oxo-3-methylvalerate) and of (2R)-2,3-dihydroxy-3-methylbutanoate (2,3-dihydroxyisovalerate) into 2-oxo-3-methylbutanoate (2-oxoisovalerate), the penultimate precursor to L-isoleucine and L-valine, respectively. The chain is Dihydroxy-acid dehydratase from Leuconostoc mesenteroides subsp. mesenteroides (strain ATCC 8293 / DSM 20343 / BCRC 11652 / CCM 1803 / JCM 6124 / NCDO 523 / NBRC 100496 / NCIMB 8023 / NCTC 12954 / NRRL B-1118 / 37Y).